The following is a 108-amino-acid chain: Cell wall protein PGA48 (108 aa).

The N-terminal stretch at 1-17 (MFKFVIYLFTFIAFANA) is a signal peptide. Residues Asn18, Asn41, and Asn77 are each glycosylated (N-linked (GlcNAc...) asparagine). The GPI-anchor amidated asparagine moiety is linked to residue Asn84. Positions 85–108 (GASKLNLRSLAGAGLVAAIFIAFI) are cleaved as a propeptide — removed in mature form.

This sequence belongs to the SED1 family. The GPI-anchor is attached to the protein in the endoplasmic reticulum and serves to target the protein to the cell surface. There, the glucosamine-inositol phospholipid moiety is cleaved off and the GPI-modified mannoprotein is covalently attached via its lipidless GPI glycan remnant to the 1,6-beta-glucan of the outer cell wall layer.

Its subcellular location is the secreted. It is found in the cell wall. The protein resides in the membrane. Its function is as follows. Cell wall protein that plays a role in adaptation and resistance to cell wall stress. This chain is Cell wall protein PGA48 (PGA48), found in Candida albicans (strain SC5314 / ATCC MYA-2876) (Yeast).